The sequence spans 331 residues: ADP,ATP carrier protein 1, mitochondrial (331 aa).

Solcar repeat units lie at residues 29–122 (KNFA…FKRM), 134–226 (KWFG…LKPV), and 238–320 (ASFA…LQIL). A run of 5 helical transmembrane segments spans residues 31 to 58 (FAID…VKLL), 99 to 123 (TANV…KRMF), 132 to 152 (YWKW…SSLF), 202 to 223 (FNIS…YDSL), and 237 to 257 (FASF…SYPI). ADP is bound by residues Arg-104 and Lys-116. Residue Arg-261 coordinates ADP. An important for transport activity region spans residues 261–266 (RRRMMM). Positions 261 to 266 (RRRMMM) match the Nucleotide carrier signature motif motif. Residues 297 to 317 (AGANILRAIAGAGVLSGYDQL) traverse the membrane as a helical segment.

The protein belongs to the mitochondrial carrier (TC 2.A.29) family. As to quaternary structure, monomer.

It localises to the mitochondrion inner membrane. It carries out the reaction ADP(in) + ATP(out) = ADP(out) + ATP(in). With respect to regulation, the matrix-open state (m-state) is inhibited by the membrane-permeable bongkrekic acid (BKA). The cytoplasmic-open state (c-state) is inhibited by the membrane-impermeable toxic inhibitor carboxyatractyloside (CATR). Its function is as follows. ADP:ATP antiporter that mediates import of ADP into the mitochondrial matrix for ATP synthesis, and export of ATP out to fuel the cell. Cycles between the cytoplasmic-open state (c-state) and the matrix-open state (m-state): operates by the alternating access mechanism with a single substrate-binding site intermittently exposed to either the cytosolic (c-state) or matrix (m-state) side of the inner mitochondrial membrane. The chain is ADP,ATP carrier protein 1, mitochondrial (ANT-G1) from Triticum aestivum (Wheat).